The chain runs to 168 residues: 6,7-dimethyl-8-ribityllumazine synthase (168 aa).

5-amino-6-(D-ribitylamino)uracil-binding positions include W31, 65–67 (SFE), and 89–91 (CVV). 94 to 95 (DT) is a (2S)-2-hydroxy-3-oxobutyl phosphate binding site. The active-site Proton donor is the H97. Y122 is a binding site for 5-amino-6-(D-ribitylamino)uracil. Position 136 (R136) interacts with (2S)-2-hydroxy-3-oxobutyl phosphate.

This sequence belongs to the DMRL synthase family.

The enzyme catalyses (2S)-2-hydroxy-3-oxobutyl phosphate + 5-amino-6-(D-ribitylamino)uracil = 6,7-dimethyl-8-(1-D-ribityl)lumazine + phosphate + 2 H2O + H(+). Its pathway is cofactor biosynthesis; riboflavin biosynthesis; riboflavin from 2-hydroxy-3-oxobutyl phosphate and 5-amino-6-(D-ribitylamino)uracil: step 1/2. Its function is as follows. Catalyzes the formation of 6,7-dimethyl-8-ribityllumazine by condensation of 5-amino-6-(D-ribitylamino)uracil with 3,4-dihydroxy-2-butanone 4-phosphate. This is the penultimate step in the biosynthesis of riboflavin. This Phocaeicola vulgatus (strain ATCC 8482 / DSM 1447 / JCM 5826 / CCUG 4940 / NBRC 14291 / NCTC 11154) (Bacteroides vulgatus) protein is 6,7-dimethyl-8-ribityllumazine synthase.